The primary structure comprises 332 residues: Apoptosis-enhancing nuclease (332 aa).

Positions 1–102 are disordered; the sequence is MVPREVPESS…VPREAPSSGP (102 aa). Residues 20-36 show a composition bias toward basic residues; that stretch reads ARRRHKRRSRQHQRFMA. The Nucleolar localization signal signature appears at 21–29; it reads RRRHKRRSR. Residues 63–73 are compositionally biased toward polar residues; it reads QTPAGTEASGN. Residues 105–261 form the Exonuclease domain; sequence YVAIDCEMVG…EDAMTAMELY (157 aa). Positions 160 to 183 match the Nuclear localization signal motif; it reads RQHMHKAIPFQVAQKEILKLLKGK. Residues 272 to 332 form a disordered region; the sequence is VASTAKAHPE…EGQGARSAPP (61 aa). A compositionally biased stretch (basic and acidic residues) spans 310–321; the sequence is GDTREAQDRQEG.

Its subcellular location is the nucleus. It localises to the nucleolus. In terms of biological role, exonuclease with activity against single- and double-stranded DNA and RNA. Mediates p53-induced apoptosis. When induced by p53 following DNA damage, digests double-stranded DNA to form single-stranded DNA and amplifies DNA damage signals, leading to enhancement of apoptosis. The polypeptide is Apoptosis-enhancing nuclease (Rattus norvegicus (Rat)).